The chain runs to 156 residues: Transcription antitermination protein NusB (156 aa).

It belongs to the NusB family.

Functionally, involved in transcription antitermination. Required for transcription of ribosomal RNA (rRNA) genes. Binds specifically to the boxA antiterminator sequence of the ribosomal RNA (rrn) operons. The sequence is that of Transcription antitermination protein NusB from Mycobacterium tuberculosis (strain CDC 1551 / Oshkosh).